Consider the following 448-residue polypeptide: Delta(14)-sterol reductase ERG24 (448 aa).

7 consecutive transmembrane segments (helical) span residues 18–38 (ISGA…FYLL), 75–95 (CWSA…LLPG), 108–128 (VLNY…LLLA), 157–177 (IIIC…ISFI), 251–271 (VTDS…DGVL), 279–299 (MIDI…LAWV), and 318–338 (NLGW…FYIF). NADP(+) contacts are provided by residues lysine 345, arginine 349, leucine 368, tryptophan 373, and 380-381 (NY). The chain crosses the membrane as a helical span at residues 394 to 414 (PTGFQTPLTYFYVIYFASLLI). Residues aspartate 420, 424 to 428 (CRAKY), and tyrosine 435 contribute to the NADP(+) site.

Belongs to the ERG4/ERG24 family.

The protein localises to the endoplasmic reticulum membrane. The catalysed reaction is 4,4-dimethyl-5alpha-cholesta-8,24-dien-3beta-ol + NADP(+) = 4,4-dimethyl-5alpha-cholesta-8,14,24-trien-3beta-ol + NADPH + H(+). The protein operates within steroid biosynthesis; zymosterol biosynthesis; zymosterol from lanosterol: step 2/6. Functionally, C-14 sterol reductase; part of the third module of ergosterol biosynthesis pathway that includes the late steps of the pathway. ERG24 reduces the C14=C15 double bond of 4,4-dimethyl-cholesta-8,14,24-trienol to produce 4,4-dimethyl-cholesta-8,24-dienol. The third module or late pathway involves the ergosterol synthesis itself through consecutive reactions that mainly occur in the endoplasmic reticulum (ER) membrane. Firstly, the squalene synthase ERG9 catalyzes the condensation of 2 farnesyl pyrophosphate moieties to form squalene, which is the precursor of all steroids. Squalene synthase is crucial for balancing the incorporation of farnesyl diphosphate (FPP) into sterol and nonsterol isoprene synthesis. Secondly, the squalene epoxidase ERG1 catalyzes the stereospecific oxidation of squalene to (S)-2,3-epoxysqualene, which is considered to be a rate-limiting enzyme in steroid biosynthesis. Then, the lanosterol synthase ERG7 catalyzes the cyclization of (S)-2,3 oxidosqualene to lanosterol, a reaction that forms the sterol core. In the next steps, lanosterol is transformed to zymosterol through a complex process involving various demethylation, reduction and desaturation reactions. The lanosterol 14-alpha-demethylase ERG11 (also known as CYP51) catalyzes C14-demethylation of lanosterol to produce 4,4'-dimethyl cholesta-8,14,24-triene-3-beta-ol, which is critical for ergosterol biosynthesis. The C-14 reductase ERG24 reduces the C14=C15 double bond of 4,4-dimethyl-cholesta-8,14,24-trienol to produce 4,4-dimethyl-cholesta-8,24-dienol. 4,4-dimethyl-cholesta-8,24-dienol is substrate of the C-4 demethylation complex ERG25-ERG26-ERG27 in which ERG25 catalyzes the three-step monooxygenation required for the demethylation of 4,4-dimethyl and 4alpha-methylsterols, ERG26 catalyzes the oxidative decarboxylation that results in a reduction of the 3-beta-hydroxy group at the C-3 carbon to an oxo group, and ERG27 is responsible for the reduction of the keto group on the C-3. ERG28 has a role as a scaffold to help anchor ERG25, ERG26 and ERG27 to the endoplasmic reticulum and ERG29 regulates the activity of the iron-containing C4-methylsterol oxidase ERG25. Then, the sterol 24-C-methyltransferase ERG6 catalyzes the methyl transfer from S-adenosyl-methionine to the C-24 of zymosterol to form fecosterol. The C-8 sterol isomerase ERG2 catalyzes the reaction which results in unsaturation at C-7 in the B ring of sterols and thus converts fecosterol to episterol. The sterol-C5-desaturase ERG3 then catalyzes the introduction of a C-5 double bond in the B ring to produce 5-dehydroepisterol. The C-22 sterol desaturase ERG5 further converts 5-dehydroepisterol into ergosta-5,7,22,24(28)-tetraen-3beta-ol by forming the C-22(23) double bond in the sterol side chain. Finally, ergosta-5,7,22,24(28)-tetraen-3beta-ol is substrate of the C-24(28) sterol reductase ERG4 to produce ergosterol. This Candida albicans (strain SC5314 / ATCC MYA-2876) (Yeast) protein is Delta(14)-sterol reductase ERG24.